Here is a 760-residue protein sequence, read N- to C-terminus: ATP-dependent RNA helicase dbp7 (760 aa).

Positions 23 to 34 (KLKGGTWRDRLS) are enriched in basic and acidic residues. The segment at 23–129 (KLKGGTWRDR…EPVEDAKPTN (107 aa)) is disordered. Over residues 38–47 (IAQHRTKNPR) the composition is skewed to basic residues. The span at 58–72 (KGPQNPNRIQVSSSR) shows a compositional bias: polar residues. Over residues 77-94 (QKTDADGDNEKSRHDNKQ) the composition is skewed to basic and acidic residues. Polar residues predominate over residues 99 to 110 (FVSSLFSKNPTP). A Q motif motif is present at residues 137-166 (DTFTNLGLSPSLAAHLLTKLELKAPTGIQK). The Helicase ATP-binding domain occupies 170–372 (SQLLKEDSDA…EISLKDAVHI (203 aa)). ATP is bound at residue 183–190 (AETGSGKT). The short motif at 308-311 (DEGD) is the DEAD box element. The Helicase C-terminal domain maps to 396 to 609 (QLKQSYAIVA…LTRTTAEDIL (214 aa)). 2 disordered regions span residues 453–490 (YRDE…AVAF) and 692–760 (SKIN…FNLA). The segment covering 456-470 (ESEDEDEEKEDDDED) has biased composition (acidic residues). Positions 701 to 716 (PGDKEAKKDYKAERNT) are enriched in basic and acidic residues. Polar residues predominate over residues 731–740 (QPSNDATSAA).

The protein belongs to the DEAD box helicase family. DDX31/DBP7 subfamily.

It is found in the nucleus. The protein resides in the nucleolus. It catalyses the reaction ATP + H2O = ADP + phosphate + H(+). In terms of biological role, ATP-binding RNA helicase involved in the biogenesis of 60S ribosomal subunits and is required for the normal formation of 25S and 5.8S rRNAs. This is ATP-dependent RNA helicase dbp7 (dbp7) from Aspergillus oryzae (strain ATCC 42149 / RIB 40) (Yellow koji mold).